The primary structure comprises 78 residues: Acyl carrier protein (78 aa).

Positions 1–77 (MALIDEIKDV…DAAKYIEEHK (77 aa)) constitute a Carrier domain. The residue at position 37 (serine 37) is an O-(pantetheine 4'-phosphoryl)serine.

It belongs to the acyl carrier protein (ACP) family. 4'-phosphopantetheine is transferred from CoA to a specific serine of apo-ACP by AcpS. This modification is essential for activity because fatty acids are bound in thioester linkage to the sulfhydryl of the prosthetic group.

The protein localises to the secreted. The protein operates within lipid metabolism; fatty acid biosynthesis. Carrier of the growing fatty acid chain in fatty acid biosynthesis. Has hemolytic activity forming pores approximately 1 nm in diameter into erythrocytes. Is able to induce murine colonic lesions and to disrupt the integrity of epithelial cell monolayers. This chain is Acyl carrier protein (acpP), found in Brachyspira hyodysenteriae (Treponema hyodysenteriae).